The chain runs to 320 residues: Glutaconate CoA-transferase subunit A (320 aa).

It belongs to the 3-oxoacid CoA-transferase subunit A family. In terms of assembly, heterooctamer of four A and four B subunits.

The protein localises to the cytoplasm. The enzyme catalyses trans-glutaconate + acetyl-CoA = (2E)-glutaconyl-CoA + acetate. The protein operates within amino-acid degradation; L-glutamate degradation via hydroxyglutarate pathway; crotonoyl-CoA from L-glutamate: step 3/5. Catalyzes the transfer of the CoA moiety from acetyl-CoA to (R)-2-hydroxyglutarate and related compounds like glutaconate. The protein is Glutaconate CoA-transferase subunit A (gctA) of Acidaminococcus fermentans (strain ATCC 25085 / DSM 20731 / CCUG 9996 / CIP 106432 / VR4).